Consider the following 370-residue polypeptide: Molybdenum import ATP-binding protein ModC (370 aa).

Residues 2 to 233 (SVRVDIGHRL…LDLLPAEERG (232 aa)) enclose the ABC transporter domain. 31–38 (GPSGSGKT) provides a ligand contact to ATP. The Mop domain occupies 293–359 (GLSALNILPG…VKTVSFDRAN (67 aa)).

Belongs to the ABC transporter superfamily. Molybdate importer (TC 3.A.1.8) family. In terms of assembly, the complex is composed of two ATP-binding proteins (ModC), two transmembrane proteins (ModB) and a solute-binding protein (ModA).

It is found in the cell inner membrane. It carries out the reaction molybdate(out) + ATP + H2O = molybdate(in) + ADP + phosphate + H(+). In terms of biological role, part of the ABC transporter complex ModABC involved in molybdenum import. Responsible for energy coupling to the transport system. This is Molybdenum import ATP-binding protein ModC from Mesorhizobium japonicum (strain LMG 29417 / CECT 9101 / MAFF 303099) (Mesorhizobium loti (strain MAFF 303099)).